Reading from the N-terminus, the 416-residue chain is Leu/Ile/Val-binding protein homolog 4 (416 aa).

The first 26 residues, 1-26 (MSLKVFLQAGVACAALSLAGAAGASA), serve as a signal peptide directing secretion.

It belongs to the leucine-binding protein family.

Its function is as follows. Component of an amino-acid transport system. The sequence is that of Leu/Ile/Val-binding protein homolog 4 from Brucella abortus (strain 2308).